The following is a 247-amino-acid chain: Sensory rhodopsin-1 (247 aa).

At 1-4 (MTGA) the chain is on the extracellular side. A helical transmembrane segment spans residues 5–26 (VSAAYWIAAVAFLVGLGITAAL). Over 27 to 35 (YAKLGESED) the chain is Cytoplasmic. A helical transmembrane segment spans residues 36–57 (RGRLAALAVIPGFAGLAYAGMA). Residues 58-71 (LGIGTVTVNGAELV) are Extracellular-facing. The helical transmembrane segment at 72–93 (GLRYVDWIVTTPLLVGFIGYVA) threads the bilayer. Residues 94-96 (GAS) lie on the Cytoplasmic side of the membrane. Residues 97-119 (RRAIAGVMLADALMIAFGAGAVV) traverse the membrane as a helical segment. Residues 120 to 123 (TGGT) are Extracellular-facing. Residues 124-151 (LKWVLFGVSSIFHVTLFAYLYVVFPRAV) traverse the membrane as a helical segment. Over 152–154 (PDD) the chain is Cytoplasmic. A helical membrane pass occupies residues 155 to 182 (PMQRGLFSLLKNHVGLLWLAYPFVWLMG). Over 183 to 190 (PAGIGFTT) the chain is Extracellular. The chain crosses the membrane as a helical span at residues 191–223 (GVGAALTYAFLDVLAKVPYVYFFYARRQAFTDV). N6-(retinylidene)lysine is present on K206. Over 224 to 247 (VSAATADREDATDAVGDGAPTAAD) the chain is Cytoplasmic.

The protein belongs to the archaeal/bacterial/fungal opsin family. In terms of assembly, interacts with HTR-I.

The protein resides in the cell membrane. Involved in the control of phototaxis. Mediates both photoattractant (in the orange light) and photophobic (in the near UV light) responses. The signal is then transmitted to the sensory rhodopsin I transducer (HTR-I). The chain is Sensory rhodopsin-1 (sop1) from Halobacterium sp. (strain SG1).